Reading from the N-terminus, the 219-residue chain is Dehydration-responsive element-binding protein 1E (219 aa).

Low complexity predominate over residues 1–19 (MEWAYYGSGYSSSGTPSPV). Residues 1–44 (MEWAYYGSGYSSSGTPSPVGGDGDEDSYMTVSSAPPKRRAGRTK) form a disordered region. The segment at residues 52 to 109 (VYKGVRSRNPGRWVCEVREPHGKQRIWLGTFETAEMAARAHDVAAMALRGRAACLNFA) is a DNA-binding region (AP2/ERF).

This sequence belongs to the AP2/ERF transcription factor family. ERF subfamily.

It is found in the nucleus. In terms of biological role, transcriptional activator that binds specifically to the DNA sequence 5'-[AG]CCGAC-3'. Binding to the C-repeat/DRE element mediates high salinity- and dehydration-inducible transcription. The protein is Dehydration-responsive element-binding protein 1E (DREB1E) of Oryza sativa subsp. indica (Rice).